Here is a 182-residue protein sequence, read N- to C-terminus: Translation initiation factor IF-3, chloroplastic (182 aa).

This sequence belongs to the IF-3 family. Monomer.

It localises to the plastid. Its subcellular location is the chloroplast. Its function is as follows. IF-3 binds to the 30S ribosomal subunit and shifts the equilibrium between 70S ribosomes and their 50S and 30S subunits in favor of the free subunits, thus enhancing the availability of 30S subunits on which protein synthesis initiation begins. This is Translation initiation factor IF-3, chloroplastic from Porphyra purpurea (Red seaweed).